The sequence spans 122 residues: Large ribosomal subunit protein uL14 (122 aa).

Belongs to the universal ribosomal protein uL14 family. As to quaternary structure, part of the 50S ribosomal subunit. Forms a cluster with proteins L3 and L19. In the 70S ribosome, L14 and L19 interact and together make contacts with the 16S rRNA in bridges B5 and B8.

Functionally, binds to 23S rRNA. Forms part of two intersubunit bridges in the 70S ribosome. This is Large ribosomal subunit protein uL14 from Macrococcus caseolyticus (strain JCSC5402) (Macrococcoides caseolyticum).